The primary structure comprises 208 residues: Small ribosomal subunit protein uS4 (208 aa).

Residues 98–160 (RRIDNTVYRL…SRQLQMINEA (63 aa)) form the S4 RNA-binding domain.

It belongs to the universal ribosomal protein uS4 family. As to quaternary structure, part of the 30S ribosomal subunit. Contacts protein S5. The interaction surface between S4 and S5 is involved in control of translational fidelity.

In terms of biological role, one of the primary rRNA binding proteins, it binds directly to 16S rRNA where it nucleates assembly of the body of the 30S subunit. With S5 and S12 plays an important role in translational accuracy. This is Small ribosomal subunit protein uS4 from Syntrophobacter fumaroxidans (strain DSM 10017 / MPOB).